Consider the following 178-residue polypeptide: MREFRLIFVLLFFLPSFAIANTEIINVETGDSNKLLTSNSVCDIELSNNSSIPLLLKPNPTIPQAAGAPQQSKYTFSVCGLKPLQKYQIRASWPAVYPSDIILNYNITHIIVEINASFYSHNESLMKRPPLVPLRLVVEPLLLGFLPKSVLPIVGFVFVIILIALICMTNLFIKHKRD.

Positions 1 to 20 (MREFRLIFVLLFFLPSFAIA) are cleaved as a signal peptide. Topologically, residues 21-152 (NTEIINVETG…LGFLPKSVLP (132 aa)) are lumenal. 5 N-linked (GlcNAc...) asparagine glycosylation sites follow: Asn48, Asn49, Asn106, Asn115, and Asn122. A helical membrane pass occupies residues 153-173 (IVGFVFVIILIALICMTNLFI). Residues 174-178 (KHKRD) are Cytoplasmic-facing.

As to quaternary structure, part of the GPI mannosyltransferase 2 complex composed of gpi18 and C167.09.

It is found in the endoplasmic reticulum membrane. Its pathway is glycolipid biosynthesis; glycosylphosphatidylinositol-anchor biosynthesis. Its function is as follows. Essential component of the GPI mannosyltransferase 2 complex. Responsible for the transfer of the second mannose to the glycosylphosphatidylinositol during GPI precursor assembly. This Schizosaccharomyces pombe (strain 972 / ATCC 24843) (Fission yeast) protein is GPI mannosyltransferase 2 subunit C167.09.